A 327-amino-acid polypeptide reads, in one-letter code: 3' cyclic ADP-D-ribose synthase AaTIR (327 aa).

Residues 10–120 (VALSFAGENR…GILKTIGYIN (111 aa)) are TIR domain. Residue lysine 229 is part of the active site.

In terms of assembly, homodimer.

The enzyme catalyses NADP(+) + H2O = ADP-D-ribose 2'-phosphate + nicotinamide + H(+). It carries out the reaction NAD(+) = 3'cADPR + nicotinamide + H(+). Functionally, NAD(+) hydrolase (NADase) that generates 3'cADPR, a cyclization variant of cyclic ADP-D-ribose (also called v2-cADPR). Also cleaves NADP(+), but does not cyclize the product. In Aquimarina amphilecti, this protein is 3' cyclic ADP-D-ribose synthase AaTIR.